The primary structure comprises 91 residues: Mercuric transport protein periplasmic component (91 aa).

Residues 1 to 19 (MKKLFASLALAAVVAPVWA) form the signal peptide. The HMA domain occupies 22-88 (QTVTLSVPGM…ATADAGYPSS (67 aa)). C33 and C36 together coordinate Hg(2+).

The protein belongs to the MerP family. In terms of assembly, monomer.

It localises to the periplasm. Its function is as follows. Involved in mercury resistance. Acts as a mercury scavenger that specifically binds to a mercuric ion in the periplasm and probably passes it to the cytoplasmic mercuric reductase MerA via the mercuric transport protein MerT. This chain is Mercuric transport protein periplasmic component, found in Pseudomonas aeruginosa.